A 471-amino-acid chain; its full sequence is Glutamate--tRNA ligase (471 aa).

Positions 9-19 match the 'HIGH' region motif; it reads PSPTGYLHVGG. 4 residues coordinate Zn(2+): Cys98, Cys100, Cys125, and His127. The 'KMSKS' region signature appears at 237–241; it reads KLSKR. Residue Lys240 coordinates ATP.

Belongs to the class-I aminoacyl-tRNA synthetase family. Glutamate--tRNA ligase type 1 subfamily. Monomer. Zn(2+) is required as a cofactor.

It localises to the cytoplasm. The enzyme catalyses tRNA(Glu) + L-glutamate + ATP = L-glutamyl-tRNA(Glu) + AMP + diphosphate. Catalyzes the attachment of glutamate to tRNA(Glu) in a two-step reaction: glutamate is first activated by ATP to form Glu-AMP and then transferred to the acceptor end of tRNA(Glu). This is Glutamate--tRNA ligase from Escherichia coli O1:K1 / APEC.